A 186-amino-acid chain; its full sequence is Peptidyl-tRNA hydrolase (186 aa).

Tyrosine 15 is a binding site for tRNA. Residue histidine 20 is the Proton acceptor of the active site. TRNA is bound by residues tyrosine 64, asparagine 66, and asparagine 112.

This sequence belongs to the PTH family. Monomer.

Its subcellular location is the cytoplasm. The catalysed reaction is an N-acyl-L-alpha-aminoacyl-tRNA + H2O = an N-acyl-L-amino acid + a tRNA + H(+). In terms of biological role, hydrolyzes ribosome-free peptidyl-tRNAs (with 1 or more amino acids incorporated), which drop off the ribosome during protein synthesis, or as a result of ribosome stalling. Its function is as follows. Catalyzes the release of premature peptidyl moieties from peptidyl-tRNA molecules trapped in stalled 50S ribosomal subunits, and thus maintains levels of free tRNAs and 50S ribosomes. This chain is Peptidyl-tRNA hydrolase, found in Azobacteroides pseudotrichonymphae genomovar. CFP2.